Consider the following 3902-residue polypeptide: Mediator of RNA polymerase II transcription subunit 12 (3902 aa).

Disordered regions lie at residues 414–576 (ESLT…EELP), 619–674 (FEPF…NPKL), 694–940 (AFDP…LEAL), 977–1029 (VVEK…PEPP), 1812–1831 (TSHKTKDVKRKSANKTTETR), 2463–2675 (TVEP…NRKQ), 2719–2771 (AGAS…SSSM), 2876–3151 (RIME…PEMQ), 3195–3549 (LQAG…SSNQ), and 3563–3902 (AGLN…QQQY). Residues 420–430 (EPEEDPEEGPE) show a composition bias toward acidic residues. Positions 709 to 721 (PTPPEAPPPPPPV) are enriched in pro residues. Basic and acidic residues-rich tracts occupy residues 740–802 (EDGK…EHLN), 912–928 (KAGDDASKKTKEGKKPD), 977–1004 (VVEKDKDKTPEKATEGEKEAEKDAEKLP), and 1018–1027 (KTPEKPKTPE). Basic residues predominate over residues 1812–1824 (TSHKTKDVKRKSA). Residues 2409–3902 (QTTRLDKVAK…MGQFPNQQQY (1494 aa)) are required for nuclear localization. Positions 2474–2547 (AAVKKPEEET…VTAKDTEKDT (74 aa)) are enriched in basic and acidic residues. Residues 2480–2526 (EEETAEKKKDEAKKADEKTTKADDEKKKDETADAKKDNEKQKEEKDK) are a coiled coil. 3 stretches are compositionally biased toward low complexity: residues 2548–2566 (AAPTDAAKAAAAPVAAAPD), 2614–2632 (SRANANAETAAAAETSSTT), and 2734–2748 (PHPGMQHQSGMQHQG). Basic and acidic residues predominate over residues 2876 to 2979 (RIMEEQRILR…ERLERERVAR (104 aa)). Composition is skewed to low complexity over residues 2980–3001 (EALAAQQAQQAQQAQQAQQAQQ), 3010–3143 (QQQR…QRNP), 3196–3205 (QAGQAAGQQQ), and 3226–3236 (PQQQQQQPQQP). The segment covering 3237–3248 (GTSQIPNTTPTR) has biased composition (polar residues). Composition is skewed to low complexity over residues 3250–3275 (ANPMQGQQQQAGMQNYQNQPVLGQPG), 3284–3295 (GQQQQNQFQRQG), and 3317–3389 (GQQQ…FGRQ). Residues 3391–3409 (APNQENFQQQPGFNQNAAG) show a composition bias toward polar residues. 3 stretches are compositionally biased toward low complexity: residues 3410–3446 (QNYQRPEQQQQSQNQWNQLNQQMRPQQPQQPSQQQQN), 3454–3539 (QSQQ…QGNQ), and 3570–3619 (SSGN…RPGM). The span at 3620-3649 (GQQGMGQQGMGQQGGMGQSGRGQPGMGGQS) shows a compositional bias: gly residues. Low complexity-rich tracts occupy residues 3663–3700 (MGQPGMQQSGMQQQHGMQQQQPGAQQSGLQQAGMQQQH), 3710–3742 (QQGRNNYGSMGQQGQQSGQQQAQQHQQMSQQAQ), and 3760–3830 (QQQQ…HRGQ). The span at 3831 to 3841 (GQQGHGMGGAG) shows a compositional bias: gly residues. Positions 3842-3888 (QQHQQVPQQQQNQYFQPQQQQDQRMQQQPGGQQQQQQGQSGQQQNNQ) are enriched in low complexity. Polar residues predominate over residues 3889-3902 (HYNNMGQFPNQQQY).

Belongs to the Mediator complex subunit 12 family. In terms of assembly, component of the Mediator complex.

The protein localises to the nucleus. Component of the Mediator complex, a coactivator involved in regulated gene transcription of nearly all RNA polymerase II-dependent genes. Mediator functions as a bridge to convey information from gene-specific regulatory proteins to the basal RNA polymerase II transcription machinery. Mediator is recruited to promoters by direct interactions with regulatory proteins and serves as a scaffold for the assembly of a functional preinitiation complex with RNA polymerase II and the general transcription factors. This is Mediator of RNA polymerase II transcription subunit 12 (dpy-22) from Caenorhabditis briggsae.